A 288-amino-acid chain; its full sequence is Large ribosomal subunit protein uL2 (288 aa).

The span at 29 to 43 (PEKSLTRGFKRDKGR) shows a compositional bias: basic and acidic residues. Disordered regions lie at residues 29 to 59 (PEKSLTRGFKRDKGRNNRGVITSRRRGGGHK) and 210 to 288 (GRNR…GRQS). Basic residues-rich tracts occupy residues 210–221 (GRNRWKGRRPKV) and 272–288 (VRRRKKSSKRGRGGRQS).

Belongs to the universal ribosomal protein uL2 family. In terms of assembly, part of the 50S ribosomal subunit. Forms a bridge to the 30S subunit in the 70S ribosome.

Its function is as follows. One of the primary rRNA binding proteins. Required for association of the 30S and 50S subunits to form the 70S ribosome, for tRNA binding and peptide bond formation. It has been suggested to have peptidyltransferase activity; this is somewhat controversial. Makes several contacts with the 16S rRNA in the 70S ribosome. This Thermosynechococcus vestitus (strain NIES-2133 / IAM M-273 / BP-1) protein is Large ribosomal subunit protein uL2.